The chain runs to 162 residues: Protein cornichon homolog 2 (162 aa).

Residues 1–10 (MAFTFAAFCY) lie on the Cytoplasmic side of the membrane. The helical transmembrane segment at 11 to 31 (MLTLVLCASLIFFIIWHIIAF) threads the bilayer. Topologically, residues 32 to 72 (DDLRTDFKDPIEQGNPSRARERIKNVERVCCLLRKLVVPEY) are lumenal. The helical transmembrane segment at 73–93 (CIHGLFCLMFMCAAEWVTLGL) threads the bilayer. The Cytoplasmic segment spans residues 94–138 (NIPLLFYHLWRYFHRPADGSEVMFDPVSIMNVDILNYCQKEAWCK). Residues 139–161 (LAFYLLSFFYYLYRVGATVRYVS) form a helical membrane-spanning segment. A topological domain (lumenal) is located at residue alanine 162.

Belongs to the cornichon family.

It is found in the membrane. In terms of biological role, regulates the trafficking and gating properties of AMPA-selective glutamate receptors (AMPARs). The protein is Protein cornichon homolog 2 (cnih2) of Xenopus laevis (African clawed frog).